Consider the following 207-residue polypeptide: Large ribosomal subunit protein uL4 (207 aa).

The disordered stretch occupies residues 49-78; that stretch reads HAVKNRSAVSGGGRKPWRQKGTGRARQGSI.

It belongs to the universal ribosomal protein uL4 family. As to quaternary structure, part of the 50S ribosomal subunit.

One of the primary rRNA binding proteins, this protein initially binds near the 5'-end of the 23S rRNA. It is important during the early stages of 50S assembly. It makes multiple contacts with different domains of the 23S rRNA in the assembled 50S subunit and ribosome. Its function is as follows. Forms part of the polypeptide exit tunnel. The protein is Large ribosomal subunit protein uL4 (rplD) of Streptococcus pyogenes serotype M1.